We begin with the raw amino-acid sequence, 380 residues long: Probable protein phosphatase 2C 63 (380 aa).

The PPM-type phosphatase domain occupies 35–338 (DYSIAVVQAN…DDISVIVVYL (304 aa)). The Mn(2+) site is built by aspartate 66, glycine 67, aspartate 270, and aspartate 329.

It belongs to the PP2C family. Mg(2+) is required as a cofactor. The cofactor is Mn(2+).

The enzyme catalyses O-phospho-L-seryl-[protein] + H2O = L-seryl-[protein] + phosphate. It carries out the reaction O-phospho-L-threonyl-[protein] + H2O = L-threonyl-[protein] + phosphate. May dephosphorylate and repress plasma membrane H(+)-ATPases (PM H(+)-ATPases, e.g. AHA1 and AHA2), thus influencing negatively plant growth and fitness. The sequence is that of Probable protein phosphatase 2C 63 from Arabidopsis thaliana (Mouse-ear cress).